The primary structure comprises 214 residues: Phosphatidylcholine transfer protein (214 aa).

N-acetylmethionine is present on Met-1. The region spanning 1 to 212 (MAGPAAHFSD…MVKACQNYHK (212 aa)) is the START domain. The a 1,2-diacyl-sn-glycero-3-phosphocholine site is built by Tyr-72 and Arg-78. The residue at position 139 (Ser-139) is a Phosphoserine. Gln-157 serves as a coordination point for a 1,2-diacyl-sn-glycero-3-phosphocholine.

As to quaternary structure, interacts with ACOT13/THEM2.

Its subcellular location is the cytoplasm. Lipid transfer protein that promotes intermembrane transfer of phosphatidylcholines but no other phospholipids. Binds a single lipid molecule. May play a role in hepatocellular selection and transport of phosphatidylcholines during bile formation. This chain is Phosphatidylcholine transfer protein (Pctp), found in Rattus norvegicus (Rat).